The following is a 586-amino-acid chain: Nucleus accumbens-associated protein 2 (586 aa).

Positions 30–94 constitute a BTB domain; sequence CDVSIVVKGQ…CYTGKLTMAA (65 aa). Lysine 171 participates in a covalent cross-link: Glycyl lysine isopeptide (Lys-Gly) (interchain with G-Cter in SUMO2). Residues 177–196 are disordered; that stretch reads MPPASGPGLASKRPLETGPR. Lysine 215 is covalently cross-linked (Glycyl lysine isopeptide (Lys-Gly) (interchain with G-Cter in SUMO2)). The segment at 236-272 is disordered; that stretch reads QVPYPPGERTSPGASSLPTTDSPTSYHNEEDEEDDEA. Residues 247-261 show a composition bias toward polar residues; sequence PGASSLPTTDSPTSY. Glycyl lysine isopeptide (Lys-Gly) (interchain with G-Cter in SUMO2) cross-links involve residues lysine 297, lysine 427, and lysine 454. The BEN domain occupies 349 to 446; sequence GSGVYITRGQ…DMCTNARRVR (98 aa). The tract at residues 542–586 is disordered; sequence APEQLPADGQSSPQAFEQGNTSSSRPQTPVATATRRPEGTYAGTL. The segment covering 550–572 has biased composition (polar residues); the sequence is GQSSPQAFEQGNTSSSRPQTPVA.

Homooligomer; mediated by the BTB domain. Interacts with the NuRD complex. Interacts (via C-terminal part) with HDAC2. Interacts (via BTB domain) with MTA1, MTA2 and MTA3.

It is found in the nucleus. Functionally, functions as a transcriptional repressor through its association with the NuRD complex. Recruits the NuRD complex to the promoter of MDM2, leading to the repression of MDM2 transcription and subsequent stability of p53/TP53. This Mus musculus (Mouse) protein is Nucleus accumbens-associated protein 2 (Nacc2).